An 83-amino-acid polypeptide reads, in one-letter code: Small ribosomal subunit protein bS18 (83 aa).

This sequence belongs to the bacterial ribosomal protein bS18 family. As to quaternary structure, part of the 30S ribosomal subunit. Forms a tight heterodimer with protein bS6.

In terms of biological role, binds as a heterodimer with protein bS6 to the central domain of the 16S rRNA, where it helps stabilize the platform of the 30S subunit. This is Small ribosomal subunit protein bS18 from Methylobacterium radiotolerans (strain ATCC 27329 / DSM 1819 / JCM 2831 / NBRC 15690 / NCIMB 10815 / 0-1).